We begin with the raw amino-acid sequence, 541 residues long: Arginine-containing cyclodipeptide synthase avaA (541 aa).

Positions 428 to 432 (DDIAE) match the Conserved DDXXE motif motif.

This sequence belongs to the arginine-containing cyclodipeptide synthase family.

The catalysed reaction is L-tryptophyl-tRNA(Trp) + L-arginyl-tRNA(Arg) = cyclo(L-arginyl-L-tryptophyl) + tRNA(Trp) + tRNA(Arg) + H(+). It functions in the pathway secondary metabolite biosynthesis. Functionally, arginine-containing cyclodipeptide synthase; part of the cluster that mediates the biosynthesis of a highly modified cyclo-arginine-tryptophan dipeptide (cRW). Within the pathway, avaA acts as the scaffold-generating enzyme and is responsible for formation of the cyclo-Arg-Trp diketopiperazine (cRW) from L-arginyl-tRNA(Arg) + L-tryptophanyl-tRNA(Trp). AvaB then acts as a multifunctional flavoenzyme that is responsible for generating the cyclo-Arg-formylkynurenine DKP, which can be deformylated by avaC. AvaB then catalyzes an additional N-oxidation followed by cyclization and dehydration. The next step is an N-acetylation of the guanidine group catalyzed by the arginine N-acetyltransferase AvaD. The role of the additional enzymes identified within the ava cluster still have to be determined. The sequence is that of Arginine-containing cyclodipeptide synthase avaA from Aspergillus versicolor.